The chain runs to 542 residues: CTP synthase (542 aa).

Residues 1–265 (MARYVFITGG…DNEVLAAFGI (265 aa)) are amidoligase domain. Residue S13 participates in CTP binding. S13 is a binding site for UTP. Residues 14–19 (SLGKGI) and D71 each bind ATP. Residues D71 and E139 each contribute to the Mg(2+) site. Residues 146-148 (DIE), 186-191 (KTKPTQ), and K222 contribute to the CTP site. Residues 186–191 (KTKPTQ) and K222 contribute to the UTP site. The Glutamine amidotransferase type-1 domain maps to 291 to 541 (TIAIVGKYTG…IEAALEQSRL (251 aa)). Residue G353 participates in L-glutamine binding. C380 (nucleophile; for glutamine hydrolysis) is an active-site residue. L-glutamine is bound by residues 381–384 (FGMQ), E404, and R469. Residues H514 and E516 contribute to the active site.

Belongs to the CTP synthase family. As to quaternary structure, homotetramer.

It catalyses the reaction UTP + L-glutamine + ATP + H2O = CTP + L-glutamate + ADP + phosphate + 2 H(+). It carries out the reaction L-glutamine + H2O = L-glutamate + NH4(+). The enzyme catalyses UTP + NH4(+) + ATP = CTP + ADP + phosphate + 2 H(+). It functions in the pathway pyrimidine metabolism; CTP biosynthesis via de novo pathway; CTP from UDP: step 2/2. Its activity is regulated as follows. Allosterically activated by GTP, when glutamine is the substrate; GTP has no effect on the reaction when ammonia is the substrate. The allosteric effector GTP functions by stabilizing the protein conformation that binds the tetrahedral intermediate(s) formed during glutamine hydrolysis. Inhibited by the product CTP, via allosteric rather than competitive inhibition. Functionally, catalyzes the ATP-dependent amination of UTP to CTP with either L-glutamine or ammonia as the source of nitrogen. Regulates intracellular CTP levels through interactions with the four ribonucleotide triphosphates. The sequence is that of CTP synthase from Sinorhizobium medicae (strain WSM419) (Ensifer medicae).